The chain runs to 176 residues: Large ribosomal subunit protein uL6 (176 aa).

The protein belongs to the universal ribosomal protein uL6 family. Part of the 50S ribosomal subunit.

This protein binds to the 23S rRNA, and is important in its secondary structure. It is located near the subunit interface in the base of the L7/L12 stalk, and near the tRNA binding site of the peptidyltransferase center. This is Large ribosomal subunit protein uL6 from Methanospirillum hungatei JF-1 (strain ATCC 27890 / DSM 864 / NBRC 100397 / JF-1).